A 451-amino-acid polypeptide reads, in one-letter code: Adenylyltransferase and sulfurtransferase MOCS3 (451 aa).

Residue Thr-60 is modified to Phosphothreonine. Residues Gly-99, Asp-120, 127–131 (SNFHR), Lys-144, and 188–189 (DN) contribute to the ATP site. 2 residues coordinate Zn(2+): Cys-229 and Cys-232. Cys-246 (glycyl thioester intermediate; for adenylyltransferase activity) is an active-site residue. Residues Cys-304 and Cys-307 each coordinate Zn(2+). In terms of domain architecture, Rhodanese spans 353 to 449 (QQQPHLLIDV…WTHKVDPSFP (97 aa)). Cys-408 serves as the catalytic Cysteine persulfide intermediate; for sulfurtransferase activity.

The protein in the N-terminal section; belongs to the HesA/MoeB/ThiF family. UBA4 subfamily. The cofactor is Zn(2+).

It localises to the cytoplasm. Its subcellular location is the cytosol. It carries out the reaction [molybdopterin-synthase sulfur-carrier protein]-C-terminal Gly-Gly + ATP + H(+) = [molybdopterin-synthase sulfur-carrier protein]-C-terminal Gly-Gly-AMP + diphosphate. It catalyses the reaction [molybdopterin-synthase sulfur-carrier protein]-C-terminal Gly-Gly-AMP + S-sulfanyl-L-cysteinyl-[cysteine desulfurase] + AH2 = [molybdopterin-synthase sulfur-carrier protein]-C-terminal-Gly-aminoethanethioate + L-cysteinyl-[cysteine desulfurase] + A + AMP + 2 H(+). It functions in the pathway tRNA modification; 5-methoxycarbonylmethyl-2-thiouridine-tRNA biosynthesis. Its pathway is cofactor biosynthesis; molybdopterin biosynthesis. Its function is as follows. Plays a central role in 2-thiolation of mcm(5)S(2)U at tRNA wobble positions of cytosolic tRNA(Lys), tRNA(Glu) and tRNA(Gln). Also essential during biosynthesis of the molybdenum cofactor. Acts by mediating the C-terminal thiocarboxylation of sulfur carriers URM1 and MOCS2A. Its N-terminus first activates URM1 and MOCS2A as acyl-adenylates (-COAMP), then the persulfide sulfur on the catalytic cysteine is transferred to URM1 and MOCS2A to form thiocarboxylation (-COSH) of their C-terminus. The reaction probably involves hydrogen sulfide that is generated from the persulfide intermediate and that acts as a nucleophile towards URM1 and MOCS2A. Subsequently, a transient disulfide bond is formed. Does not use thiosulfate as sulfur donor; NFS1 probably acting as a sulfur donor for thiocarboxylation reactions. This Drosophila ananassae (Fruit fly) protein is Adenylyltransferase and sulfurtransferase MOCS3.